A 174-amino-acid polypeptide reads, in one-letter code: MASLRPNRCYRDVDKPPYTRKEYVKGVPQPKVVHFIMGNLSAEFPVKVNLVATRPIQIRHNALEAARVAANKYLTKMCGRMGYKFQIRVYPHQILREHKMATGAGADRISDGMRLAFGKPIGTAARVKEGQAILTVWVNPDKFPAAKEALRRAAMKLPVPCRIVIEQGKELLKL.

Belongs to the universal ribosomal protein uL16 family.

This Methanocaldococcus jannaschii (strain ATCC 43067 / DSM 2661 / JAL-1 / JCM 10045 / NBRC 100440) (Methanococcus jannaschii) protein is Large ribosomal subunit protein uL16.